Here is a 495-residue protein sequence, read N- to C-terminus: Cytochrome P450 monooxygenase cnsC (495 aa).

Cys434 is a binding site for heme.

Belongs to the cytochrome P450 family. The cofactor is heme.

The protein operates within alkaloid biosynthesis. Cytochrome P450 monooxygenase; part of the gene cluster that mediates the biosynthesis of communesins, a prominent class of indole alkaloids with great potential as pharmaceuticals. Communesins are biosynthesized by the coupling of tryptamine and aurantioclavine, two building blocks derived from L-tryptophan. The L-tryptophan decarboxylase cnsB converts L-tryptophan to tryptamine, whereas the tryptophan dimethylallyltransferase cnsF converts L-tryptophan to 4-dimethylallyl tryptophan which is further transformed to aurantioclavine by the aurantioclavine synthase cnsA, probably aided by the catalase cnsD. The cytochrome P450 monooxygenase cnsC catalyzes the heterodimeric coupling between the two different indole moieties, tryptamine and aurantioclavine, to construct vicinal quaternary stereocenters and yield the heptacyclic communesin scaffold. The O-methyltransferase cnsE then methylates the communesin scaffold to produce communesin K, the simplest characterized communesin that contains the heptacyclic core. The dioxygenase cnsJ converts communesin K into communesin I. Acylation to introduce the hexadienyl group at position N16 of communesin I by the acyltransferase cnsK leads to the production of communesin B. The hexadienyl group is produced by the highly reducing polyketide synthase cnsI, before being hydrolytically removed from cnsI by the serine hydrolase cnsH, converted into hexadienyl-CoA by the CoA ligase cnsG, and then transferred to communesin I by cnsK. Surprisingly, cnsK may also be a promiscuous acyltransferase that can tolerate a range of acyl groups, including acetyl-, propionyl-, and butyryl-CoA, which lead to communesins A, G and H respectively. The roles of the alpha-ketoglutarate-dependent dioxygenases cnsM and cnsP have still to be determined. This Penicillium expansum (Blue mold rot fungus) protein is Cytochrome P450 monooxygenase cnsC.